The following is a 976-amino-acid chain: MKLKSVFRSVLKYRKTNLSLLLLITYSIITLLYIFDHERYKLNLPKEDEHPEFNDLLETAWGDLQIITASFHPYTSKENDKVHDYLLKRVLEITGNSSFASVSDDKESERSILFQQQDPFNESSRFSRVTYFESSNILVKLEGKNPEEEGLLLSAHFDSVPTGYGATDDGMGVVSLLANLKYHIKHRPNRTLIFNFNNNEEFGLLGASTYFNHSWSNLTKYVINLEGTGAGGKAVLFRTSDTSTAKIYQQSVKENPFGNSIYQQGFYSRYVRSETDYKIYEENGMRGWDVAFYKPRNLYHTIKDSIQYTSKASLWHMLHTSLQLSAYVASNSLDTADQTPACYFDFIGLKFFVISAKTLFYWNCIFLLVSPVVAIGLYLISRDRMTWKSHSWLSWTRFPLSLAAGIIVQKLFSNDIIRSNPLTFSRNYFWPISAFFTQVIFTSYVLINCSNFFFPCADMKSLSIIELFIILWTILLFTSKLLYSSDYRYTGLYPLSIFFLLSTIAAILRLLALALGMRTRKRLGRECRDHHSNYSSHSQIDMERDGQENLEQPQDQFTSSQDDQASIQDDNVSTTSAGPSHNVDEDHGMDSSSQQHDERVPLLKGSNSMEEGLSTRENSLKLEYTDYAWIIQFLLIVPIPSFILFNSVDVIMDALNHTVQEGSKATFDVLRFGMVGSILMALPILPFFYKVNYITISLTALLFLISASKTLLVHPFTNSNPLKVRFSQNIDLSQGNAASVHVLGREGNFLKPMLQDLPSIKYSSTHINCTSVTNGMELCMYDGMQPNLLSTNGNTNISSMVKVHVLHNNRNSTERSPYEPIVAELLLDVKENRACTLTFESRHQAKSPVREITVYQKKNSAPQKTNITKTIKSASGINELQLHKLDFDQETYHIGVQWFPKLLTDGNLEDDKLGTKDELSVSISCYWGEYDSESVVNGTAVRKIPAFDELINYAPLSFSFTNEQKGLVIVKDAIIL.

Topologically, residues 1–15 (MKLKSVFRSVLKYRK) are cytoplasmic. The helical transmembrane segment at 16–36 (TNLSLLLLITYSIITLLYIFD) threads the bilayer. Residues 37–359 (HERYKLNLPK…KFFVISAKTL (323 aa)) lie on the Vacuolar side of the membrane. Asn96 and Asn121 each carry an N-linked (GlcNAc...) asparagine glycan. The Zn(2+) site is built by His156 and Asp168. N-linked (GlcNAc...) asparagine glycosylation occurs at Asn189. Glu200 (proton acceptor) is an active-site residue. Glu201 is a Zn(2+) binding site. Asn212 and Asn217 each carry an N-linked (GlcNAc...) asparagine glycan. Positions 226 and 300 each coordinate Zn(2+). A helical membrane pass occupies residues 360–380 (FYWNCIFLLVSPVVAIGLYLI). Residues 381 to 392 (SRDRMTWKSHSW) are Cytoplasmic-facing. The chain crosses the membrane as a helical span at residues 393–412 (LSWTRFPLSLAAGIIVQKLF). Over 413-428 (SNDIIRSNPLTFSRNY) the chain is Vacuolar. The helical transmembrane segment at 429 to 449 (FWPISAFFTQVIFTSYVLINC) threads the bilayer. The Cytoplasmic portion of the chain corresponds to 450 to 461 (SNFFFPCADMKS). The chain crosses the membrane as a helical span at residues 462-482 (LSIIELFIILWTILLFTSKLL). Residues 483 to 496 (YSSDYRYTGLYPLS) lie on the Vacuolar side of the membrane. The chain crosses the membrane as a helical span at residues 497-517 (IFFLLSTIAAILRLLALALGM). The Cytoplasmic portion of the chain corresponds to 518–627 (RTRKRLGREC…NSLKLEYTDY (110 aa)). Positions 528–610 (RDHHSNYSSH…PLLKGSNSME (83 aa)) are disordered. Residues 549-558 (NLEQPQDQFT) are compositionally biased toward polar residues. Residues 559-570 (SSQDDQASIQDD) are compositionally biased toward low complexity. The segment covering 582-601 (NVDEDHGMDSSSQQHDERVP) has biased composition (basic and acidic residues). A helical transmembrane segment spans residues 628–648 (AWIIQFLLIVPIPSFILFNSV). Topologically, residues 649–668 (DVIMDALNHTVQEGSKATFD) are vacuolar. Asn656 carries N-linked (GlcNAc...) asparagine glycosylation. Residues 669 to 689 (VLRFGMVGSILMALPILPFFY) form a helical membrane-spanning segment. Residues 690–692 (KVN) are Cytoplasmic-facing. The chain crosses the membrane as a helical span at residues 693–713 (YITISLTALLFLISASKTLLV). At 714–976 (HPFTNSNPLK…LVIVKDAIIL (263 aa)) the chain is on the vacuolar side. N-linked (GlcNAc...) asparagine glycosylation is found at Asn768, Asn796, Asn811, Asn866, and Asn937.

It belongs to the peptidase M28 family. Zn(2+) serves as cofactor.

Its subcellular location is the vacuole membrane. Its function is as follows. May be involved in vacuolar sorting and osmoregulation. The sequence is that of Vacuolar membrane protease from Saccharomyces cerevisiae (strain AWRI1631) (Baker's yeast).